Consider the following 195-residue polypeptide: U8 snoRNA-decapping enzyme (195 aa).

The Nudix hydrolase domain maps to 18–173 (GWRHACHALL…IGSAREQLLE (156 aa)). The substrate site is built by H24, R50, and F57. 4 residues coordinate Mn(2+): G59, E76, E80, and H99. The short motif at 61–82 (FVDTQDRSLEDGLNRELREELG) is the Nudix box element. Q170 is a substrate binding site. E173 serves as a coordination point for Mn(2+).

This sequence belongs to the Nudix hydrolase family. NUDT16 subfamily. In terms of assembly, homodimer. Mg(2+) serves as cofactor. It depends on Mn(2+) as a cofactor. The cofactor is Co(2+). As to expression, expressed strongly in lung, kidney, adrenal gland, testis, heart and brain.

It localises to the nucleus. It is found in the nucleoplasm. Its subcellular location is the nucleolus. The protein localises to the cytoplasm. It catalyses the reaction a 5'-end (N(7)-methyl 5'-triphosphoguanosine)-ribonucleoside in mRNA + H2O = N(7)-methyl-GDP + a 5'-end phospho-ribonucleoside in mRNA + 2 H(+). The enzyme catalyses IDP + H2O = IMP + phosphate + H(+). The catalysed reaction is dIDP + H2O = dIMP + phosphate + H(+). It carries out the reaction a 5'-end NAD(+)-phospho-ribonucleoside in mRNA + H2O = a 5'-end phospho-adenosine-phospho-ribonucleoside in mRNA + beta-nicotinamide D-ribonucleotide + 2 H(+). It catalyses the reaction a 5'-end FAD-phospho-ribonucleoside in mRNA + H2O = a 5'-end phospho-adenosine-phospho-ribonucleoside in mRNA + FMN + 2 H(+). The enzyme catalyses a 5'-end CoA-ribonucleoside in mRNA + H2O = a 5'-end phospho-adenosine-phospho-ribonucleoside in mRNA + (R)-4'-phosphopantetheine + 2 H(+). With respect to regulation, the phosphatase activity is inhibited by the product IMP. In terms of biological role, RNA-binding and decapping enzyme that catalyzes the cleavage of the cap structure of snoRNAs and mRNAs in a metal-dependent manner. Part of the U8 snoRNP complex that is required for the accumulation of mature 5.8S and 28S rRNA. Has diphosphatase activity and removes m7G and/or m227G caps from U8 snoRNA and leaves a 5'monophosphate on the RNA. Also catalyzes the cleavage of the cap structure on mRNAs. Does not hydrolyze cap analog structures like 7-methylguanosine nucleoside triphosphate (m7GpppG). Also hydrolysis m7G- and m227G U3-capped RNAs but with less efficiencies. Has broad substrate specificity with manganese or cobalt as cofactor and can act on various RNA species. Binds to the U8 snoRNA; metal is not required for RNA-binding. May play a role in the regulation of snoRNAs and mRNAs degradation. Also acts as a phosphatase; hydrolyzes the non-canonical purine nucleotides inosine diphosphate (IDP) and deoxyinosine diphosphate (dITP) as well as guanosine diphosphate (GDP), deoxyguanosine diphosphate (dGDP), xanthine diphosphate (XDP), inosine triphosphate (ITP) and deoxyinosine triphosphate (ITP) to their respective monophosphate derivatives and does not distinguish between the deoxy- and ribose forms. The order of activity with different substrates is IDP &gt; dIDP &gt;&gt; GDP = dGDP &gt; XDP = ITP = dITP. Binds strongly to GTP, ITP and XTP. Participates in the hydrolysis of dIDP/IDP and probably excludes non-canonical purines from RNA and DNA precursor pools, thus preventing their incorporation into RNA and DNA and avoiding chromosomal lesions. Exhibits decapping activity towards NAD-capped RNAs and FAD-capped RNAs. Exhibits decapping activity towards dpCoA-capped RNAs in vitro. This chain is U8 snoRNA-decapping enzyme (NUDT16), found in Homo sapiens (Human).